We begin with the raw amino-acid sequence, 136 residues long: Histone H3 (136 aa).

The protein belongs to the histone H3 family. As to quaternary structure, the nucleosome is a histone octamer containing two molecules each of H2A, H2B, H3 and H4 assembled in one H3-H4 heterotetramer and two H2A-H2B heterodimers. The octamer wraps approximately 147 bp of DNA.

The protein localises to the nucleomorph. Its subcellular location is the chromosome. In terms of biological role, core component of nucleosome. Nucleosomes wrap and compact DNA into chromatin, limiting DNA accessibility to the cellular machineries which require DNA as a template. Histones thereby play a central role in transcription regulation, DNA repair, DNA replication and chromosomal stability. DNA accessibility is regulated via a complex set of post-translational modifications of histones, also called histone code, and nucleosome remodeling. The sequence is that of Histone H3 from Guillardia theta (Cryptophyte).